The sequence spans 508 residues: BTB/POZ domain-containing protein At3g03510 (508 aa).

A BTB domain is found at 11-77 (QDLDLYVKGV…CYGYKIELSA (67 aa)). In terms of domain architecture, NPH3 spans 156–414 (TRLLQDLITL…MQVLFVSQMQ (259 aa)). Y355 bears the Phosphotyrosine mark.

This sequence belongs to the NPH3 family.

It functions in the pathway protein modification; protein ubiquitination. In terms of biological role, may act as a substrate-specific adapter of an E3 ubiquitin-protein ligase complex (CUL3-RBX1-BTB) which mediates the ubiquitination and subsequent proteasomal degradation of target proteins. This is BTB/POZ domain-containing protein At3g03510 from Arabidopsis thaliana (Mouse-ear cress).